Consider the following 430-residue polypeptide: Dihydroorotase (430 aa).

The Zn(2+) site is built by His-61 and His-63. Substrate contacts are provided by residues 63–65 (HLR) and Asn-95. The Zn(2+) site is built by Asp-153, His-180, and His-233. Position 279 (Asn-279) interacts with substrate. Position 306 (Asp-306) interacts with Zn(2+). Asp-306 is a catalytic residue. Position 310 (His-310) interacts with substrate.

The protein belongs to the metallo-dependent hydrolases superfamily. DHOase family. Class I DHOase subfamily. Requires Zn(2+) as cofactor.

The enzyme catalyses (S)-dihydroorotate + H2O = N-carbamoyl-L-aspartate + H(+). It participates in pyrimidine metabolism; UMP biosynthesis via de novo pathway; (S)-dihydroorotate from bicarbonate: step 3/3. Its function is as follows. Catalyzes the reversible cyclization of carbamoyl aspartate to dihydroorotate. The protein is Dihydroorotase of Caldicellulosiruptor saccharolyticus (strain ATCC 43494 / DSM 8903 / Tp8T 6331).